The chain runs to 119 residues: Aspartate 1-decarboxylase (119 aa).

The active-site Schiff-base intermediate with substrate; via pyruvic acid is the S25. Residue S25 is modified to Pyruvic acid (Ser). Substrate is bound at residue T57. Y58 functions as the Proton donor in the catalytic mechanism. 73-75 (GAA) contributes to the substrate binding site.

This sequence belongs to the PanD family. As to quaternary structure, heterooctamer of four alpha and four beta subunits. The cofactor is pyruvate. Is synthesized initially as an inactive proenzyme, which is activated by self-cleavage at a specific serine bond to produce a beta-subunit with a hydroxyl group at its C-terminus and an alpha-subunit with a pyruvoyl group at its N-terminus.

The protein localises to the cytoplasm. The enzyme catalyses L-aspartate + H(+) = beta-alanine + CO2. The protein operates within cofactor biosynthesis; (R)-pantothenate biosynthesis; beta-alanine from L-aspartate: step 1/1. In terms of biological role, catalyzes the pyruvoyl-dependent decarboxylation of aspartate to produce beta-alanine. The protein is Aspartate 1-decarboxylase of Desulfotalea psychrophila (strain LSv54 / DSM 12343).